The sequence spans 102 residues: Small ribosomal subunit protein uS10 (102 aa).

Belongs to the universal ribosomal protein uS10 family. Part of the 30S ribosomal subunit.

Functionally, involved in the binding of tRNA to the ribosomes. The chain is Small ribosomal subunit protein uS10 from Carboxydothermus hydrogenoformans (strain ATCC BAA-161 / DSM 6008 / Z-2901).